The primary structure comprises 202 residues: Snake venom metalloproteinase atroxlysin-1 (202 aa).

The Peptidase M12B domain occupies 6–202; sequence RYVDLFIVVD…ENPQCILNKR (197 aa). The Ca(2+) site is built by Asp-9 and Asp-93. Intrachain disulfides connect Cys-117–Cys-197, Cys-157–Cys-181, and Cys-159–Cys-164. His-142 provides a ligand contact to Zn(2+). The active site involves Glu-143. Residues His-146 and His-152 each coordinate Zn(2+). Residues Cys-197 and Asn-200 each coordinate Ca(2+).

This sequence belongs to the venom metalloproteinase (M12B) family. P-I subfamily. Monomer. Zn(2+) is required as a cofactor. In terms of tissue distribution, expressed by the venom gland.

It localises to the secreted. Inhibited by EDTA, DTT and high concentrations of zinc ions (&gt;2 mM). Weakly inhibited by TLCK. Not inhibited by PMSF. Activated by calcium ions. Snake venom zinc metalloproteinase that acts on fibrinogen, fibrin, fibronectin (FN1), type I collagen, type IV collagen, integrin alpha-7/beta-1 (ITGA7/ITGB1) and integrin alpha-1/beta-1 (ITGA1/ITGB1). Binds to fibronectin (FN1), fibrinogen and, weakly, to type I collagen and laminin. Cleaves Xaa-Leu bonds. Inhibits ADP- and collagen-induced platelet aggregation both in the presence (IC(50)=1.4 uM for collagen) and in the absence (IC(50)=2.2 uM for collagen) of cofactors. Has hemorrhagic activity. This chain is Snake venom metalloproteinase atroxlysin-1, found in Bothrops atrox (Barba amarilla).